The primary structure comprises 362 residues: MSFDINWSQLVEDESINNSIKEFLASQFSSVSLPSYIDNLTVSDFSLGDKAPEIIIRDIGDTFEDFYEDEDGPRNAGAPTTTATSGMGESDSSDDEDTRDGLTGEVTLSETTESKTQFAPQPLHPIPTKLRRSHTTSAATPLSSHAHLNSLYAYNLTNVGLGTLNLNSATPSGRDTPTQILNQMRTGPNSPPISNTPISSSKKSKRGENDVQIIAEVKYKGNLHIEVTVDLFLNYPSQHFVTLPIKLHITGFEIHSLICIAYLQNAVYFSFLCDVSDDSQADYFNGAHMESGGNFVEYVSGTNNKERIDIIKKVKIESEIGEVETNVLRNVGKVEKFLVEKIRSIIREETAWPSWLCFDMSD.

The SMP-LTD domain maps to 1-361 (MSFDINWSQL…WPSWLCFDMS (361 aa)). Disordered regions lie at residues 65 to 141 (DFYE…AATP) and 170 to 207 (TPSG…SKRG). 2 stretches are compositionally biased toward polar residues: residues 106-119 (VTLS…TQFA) and 170-187 (TPSG…MRTG). Low complexity predominate over residues 192–201 (PISNTPISSS).

It belongs to the MDM12 family. As to quaternary structure, component of the ER-mitochondria encounter structure (ERMES) or MDM complex, composed of MMM1, MDM10, MDM12 and MDM34. An MMM1 homodimer associates with one molecule of MDM12 on each side in a pairwise head-to-tail manner, and the SMP-LTD domains of MMM1 and MDM12 generate a continuous hydrophobic tunnel for phospholipid trafficking.

It localises to the mitochondrion outer membrane. The protein resides in the endoplasmic reticulum membrane. Functionally, component of the ERMES/MDM complex, which serves as a molecular tether to connect the endoplasmic reticulum (ER) and mitochondria. Components of this complex are involved in the control of mitochondrial shape and protein biogenesis, and function in nonvesicular lipid trafficking between the ER and mitochondria. MDM12 is required for the interaction of the ER-resident membrane protein MMM1 and the outer mitochondrial membrane-resident beta-barrel protein MDM10. The MDM12-MMM1 subcomplex functions in the major beta-barrel assembly pathway that is responsible for biogenesis of all mitochondrial outer membrane beta-barrel proteins, and acts in a late step after the SAM complex. The MDM10-MDM12-MMM1 subcomplex further acts in the TOM40-specific pathway after the action of the MDM12-MMM1 complex. Essential for establishing and maintaining the structure of mitochondria and maintenance of mtDNA nucleoids. This chain is Mitochondrial distribution and morphology protein 12, found in Meyerozyma guilliermondii (strain ATCC 6260 / CBS 566 / DSM 6381 / JCM 1539 / NBRC 10279 / NRRL Y-324) (Yeast).